The primary structure comprises 297 residues: Large ribosomal subunit protein uL18 (297 aa).

N-acetylglycine is present on G2. K5 and K48 each carry N6-acetyllysine. Phosphoserine is present on S185. K220 is modified (N6-acetyllysine; alternate). A Glycyl lysine isopeptide (Lys-Gly) (interchain with G-Cter in SUMO1); alternate cross-link involves residue K220. Residue K220 forms a Glycyl lysine isopeptide (Lys-Gly) (interchain with G-Cter in SUMO2); alternate linkage. T232 carries the phosphothreonine modification. The disordered stretch occupies residues 253 to 297; it reads YEKKPKKEVKKKRWNRPKMSLAQKKDRVAQKKASFLRAQERAAES. Residues 258–268 show a composition bias toward basic residues; that stretch reads KKEVKKKRWNR. The residue at position 272 (S272) is a Phosphoserine.

Belongs to the universal ribosomal protein uL18 family. In terms of assembly, component of the large ribosomal subunit (LSU). Part of the 5S RNP complex, which is a LSU subcomplex composed of the 5S RNA, RPL5 and RPL11. Component of a hexameric 5S RNP precursor complex, composed of 5S RNA, RRS1, RPF2/BXDC1, RPL5, RPL11 and HEATR3; this complex acts as a precursor for ribosome assembly. Interacts with NVL in an ATP-dependent manner. Interacts with RRP1B. Interacts with IPO5, IPO7 and KPNB1; these interactions may be involved in RPL5 nuclear import for the assembly of ribosomal subunits. Interacts with RRP1B.

The protein localises to the cytoplasm. The protein resides in the nucleus. It is found in the nucleolus. In terms of biological role, component of the ribosome, a large ribonucleoprotein complex responsible for the synthesis of proteins in the cell. The small ribosomal subunit (SSU) binds messenger RNAs (mRNAs) and translates the encoded message by selecting cognate aminoacyl-transfer RNA (tRNA) molecules. The large subunit (LSU) contains the ribosomal catalytic site termed the peptidyl transferase center (PTC), which catalyzes the formation of peptide bonds, thereby polymerizing the amino acids delivered by tRNAs into a polypeptide chain. The nascent polypeptides leave the ribosome through a tunnel in the LSU and interact with protein factors that function in enzymatic processing, targeting, and the membrane insertion of nascent chains at the exit of the ribosomal tunnel. As part of the 5S RNP/5S ribonucleoprotein particle it is an essential component of the LSU, required for its formation and the maturation of rRNAs. It also couples ribosome biogenesis to p53/TP53 activation. As part of the 5S RNP it accumulates in the nucleoplasm and inhibits MDM2, when ribosome biogenesis is perturbed, mediating the stabilization and the activation of TP53. In Macaca fascicularis (Crab-eating macaque), this protein is Large ribosomal subunit protein uL18 (RPL5).